We begin with the raw amino-acid sequence, 115 residues long: Large ribosomal subunit protein uL24 (115 aa).

This sequence belongs to the universal ribosomal protein uL24 family. In terms of assembly, part of the 50S ribosomal subunit.

Its function is as follows. One of two assembly initiator proteins, it binds directly to the 5'-end of the 23S rRNA, where it nucleates assembly of the 50S subunit. Functionally, one of the proteins that surrounds the polypeptide exit tunnel on the outside of the subunit. In Deinococcus deserti (strain DSM 17065 / CIP 109153 / LMG 22923 / VCD115), this protein is Large ribosomal subunit protein uL24.